A 785-amino-acid chain; its full sequence is Mitochondrial intermediate peptidase (785 aa).

The N-terminal 27 residues, 1 to 27 (MLKAVMPRPWVCSRCVKRQIQSSRGLA), are a transit peptide targeting the mitochondrion. A disordered region spans residues 26–52 (LATASTQYREPRPVPTDHSAPGAKHDD). H566 lines the Zn(2+) pocket. E567 is a catalytic residue. Zn(2+) contacts are provided by H570 and H573.

Belongs to the peptidase M3 family. Zn(2+) is required as a cofactor.

It is found in the mitochondrion matrix. The enzyme catalyses Release of an N-terminal octapeptide as second stage of processing of some proteins imported into the mitochondrion.. Functionally, cleaves proteins, imported into the mitochondrion, to their mature size. While most mitochondrial precursor proteins are processed to the mature form in one step by mitochondrial processing peptidase (MPP), the sequential cleavage by MIP of an octapeptide after initial processing by MPP is a required step for a subgroup of nuclear-encoded precursor proteins destined for the matrix or the inner membrane. This chain is Mitochondrial intermediate peptidase (oct1), found in Sclerotinia sclerotiorum (strain ATCC 18683 / 1980 / Ss-1) (White mold).